Here is a 201-residue protein sequence, read N- to C-terminus: ATP-dependent Clp protease proteolytic subunit (201 aa).

Catalysis depends on Ser-98, which acts as the Nucleophile. The active site involves His-123.

The protein belongs to the peptidase S14 family. Fourteen ClpP subunits assemble into 2 heptameric rings which stack back to back to give a disk-like structure with a central cavity, resembling the structure of eukaryotic proteasomes.

The protein resides in the cytoplasm. It carries out the reaction Hydrolysis of proteins to small peptides in the presence of ATP and magnesium. alpha-casein is the usual test substrate. In the absence of ATP, only oligopeptides shorter than five residues are hydrolyzed (such as succinyl-Leu-Tyr-|-NHMec, and Leu-Tyr-Leu-|-Tyr-Trp, in which cleavage of the -Tyr-|-Leu- and -Tyr-|-Trp bonds also occurs).. Functionally, cleaves peptides in various proteins in a process that requires ATP hydrolysis. Has a chymotrypsin-like activity. Plays a major role in the degradation of misfolded proteins. The chain is ATP-dependent Clp protease proteolytic subunit from Rickettsia peacockii (strain Rustic).